Consider the following 101-residue polypeptide: Putative pterin-4-alpha-carbinolamine dehydratase (101 aa).

It belongs to the pterin-4-alpha-carbinolamine dehydratase family.

The catalysed reaction is (4aS,6R)-4a-hydroxy-L-erythro-5,6,7,8-tetrahydrobiopterin = (6R)-L-erythro-6,7-dihydrobiopterin + H2O. In Ralstonia pickettii (strain 12J), this protein is Putative pterin-4-alpha-carbinolamine dehydratase.